A 464-amino-acid polypeptide reads, in one-letter code: MSTTALVEGKIVQCIGAVIDVEFPRDHMPKIYDALILEGSELTLEVQQQLGDGVVRTICLGASDGLRRGTTVKNTGKPISVPVGKPTLGRIMDVLGRPIDEAGPINSDVVRGIHQKAPAFDELSPSTELLETGIKVIDLICPFAKGGKVGLFGGAGVGKTVNMMELINNIAKEHGGYSVFAGVGERTREGNDFYHEMKDSNVLDKVALVYGQMNEPPGNRLRVALTGLTMAEHFRDEGLDVLFFVDNIYRFTLAGTEVSALLGRMPSAVGYQPTLAEEMGKLQERITSTKTGSITSVQAVYVPADDLTDPSPATTFGHLDATVVLSRDIASLGIYPAVDPLDSTSRQIDPNVIGEEHYSITRGVQQTLQRYKELRDIIAILGMDELAPEDKLAVARARKIQRFLSQPFHVAEVFTGSPGKYVPLKETIRGFKMIVEGECDHLPEQAFYMVGTIDEAFEKAKKIQ.

153 to 160 (GGAGVGKT) serves as a coordination point for ATP.

Belongs to the ATPase alpha/beta chains family. F-type ATPases have 2 components, CF(1) - the catalytic core - and CF(0) - the membrane proton channel. CF(1) has five subunits: alpha(3), beta(3), gamma(1), delta(1), epsilon(1). CF(0) has three main subunits: a(1), b(2) and c(9-12). The alpha and beta chains form an alternating ring which encloses part of the gamma chain. CF(1) is attached to CF(0) by a central stalk formed by the gamma and epsilon chains, while a peripheral stalk is formed by the delta and b chains.

It localises to the cell inner membrane. It carries out the reaction ATP + H2O + 4 H(+)(in) = ADP + phosphate + 5 H(+)(out). In terms of biological role, produces ATP from ADP in the presence of a proton gradient across the membrane. The catalytic sites are hosted primarily by the beta subunits. The sequence is that of ATP synthase subunit beta 2 from Paraburkholderia xenovorans (strain LB400).